Here is a 165-residue protein sequence, read N- to C-terminus: Ribosome maturation factor RimM (165 aa).

A PRC barrel domain is found at 94 to 165; it reads EDEFYIADLT…YVILNYQREA (72 aa).

This sequence belongs to the RimM family. Binds ribosomal protein uS19.

Its subcellular location is the cytoplasm. Functionally, an accessory protein needed during the final step in the assembly of 30S ribosomal subunit, possibly for assembly of the head region. Essential for efficient processing of 16S rRNA. May be needed both before and after RbfA during the maturation of 16S rRNA. It has affinity for free ribosomal 30S subunits but not for 70S ribosomes. In Rickettsia conorii (strain ATCC VR-613 / Malish 7), this protein is Ribosome maturation factor RimM.